Consider the following 147-residue polypeptide: Spermidine export protein MdtJ (147 aa).

4 helical membrane-spanning segments follow: residues 1–21, 31–51, 54–74, and 81–101; these read MIYW…TLSM, TGHI…SLAV, VALG…ITIF, and ETLS…ILLV. The disordered stretch occupies residues 105 to 147; the sequence is TRKPKQPNCHRGNRPPSVQELKTQTTGHHKGVAVESGEHHAAA.

It belongs to the drug/metabolite transporter (DMT) superfamily. Small multidrug resistance (SMR) (TC 2.A.7.1) family. MdtJ subfamily. As to quaternary structure, forms a complex with MdtI.

It localises to the cell inner membrane. Functionally, catalyzes the excretion of spermidine. The protein is Spermidine export protein MdtJ of Yersinia pestis bv. Antiqua (strain Antiqua).